The chain runs to 280 residues: uncharacterized protein (280 aa).

Disordered regions lie at residues 1–124 and 177–280; these read MPRD…QREA and LEEE…LSSK. Composition is skewed to basic residues over residues 16 to 36 and 48 to 83; these read SRRR…RSRR and YSRR…RQKS. Basic and acidic residues-rich tracts occupy residues 102–124 and 182–259; these read AKNR…QREA and EASL…ERLK.

This is an uncharacterized protein from Arabidopsis thaliana (Mouse-ear cress).